The sequence spans 829 residues: Ectonucleotide pyrophosphatase/phosphodiesterase C27A7.1 (829 aa).

Residues 54-74 form a helical; Signal-anchor for type II membrane protein membrane-spanning segment; it reads VIGIAVLLLAMVVIVVIVLLL. Thr-224 functions as the Nucleophile in the catalytic mechanism. Asn-296, Asn-424, Asn-514, Asn-542, Asn-582, Asn-649, Asn-733, and Asn-748 each carry an N-linked (GlcNAc...) asparagine glycan. The cysteines at positions 439 and 782 are disulfide-linked.

It belongs to the nucleotide pyrophosphatase/phosphodiesterase family.

Its subcellular location is the membrane. Its function is as follows. Probable phosphodiesterase. The chain is Ectonucleotide pyrophosphatase/phosphodiesterase C27A7.1 from Caenorhabditis elegans.